Here is a 248-residue protein sequence, read N- to C-terminus: Probable transcriptional regulatory protein BH14810 (248 aa).

This sequence belongs to the TACO1 family.

Its subcellular location is the cytoplasm. The protein is Probable transcriptional regulatory protein BH14810 of Bartonella henselae (strain ATCC 49882 / DSM 28221 / CCUG 30454 / Houston 1) (Rochalimaea henselae).